Consider the following 79-residue polypeptide: Sulfur carrier protein TusA (79 aa).

The Cysteine persulfide intermediate role is filled by cysteine 17.

This sequence belongs to the sulfur carrier protein TusA family.

It localises to the cytoplasm. Sulfur carrier protein which probably makes part of a sulfur-relay system. This chain is Sulfur carrier protein TusA, found in Actinobacillus pleuropneumoniae serotype 5b (strain L20).